Here is a 393-residue protein sequence, read N- to C-terminus: Dual specificity mitogen-activated protein kinase kinase 1 (393 aa).

A disordered region spans residues 1–27 (MPKKKPTPIQLNPAPDGSAVNGTSSAE). Positions 68–361 (FEKISELGAG…LKQLMVHAFI (294 aa)) constitute a Protein kinase domain. Residues 74–82 (LGAGNGGVV) and K97 contribute to the ATP site. The active-site Proton acceptor is D190. Phosphoserine; by RAF occurs at positions 218 and 222. The tract at residues 270–307 (ELELMFGCQVEGDAAETPPRPRTPGRPLSSYGMDSRPP) is RAF1-binding. Residue T286 is modified to Phosphothreonine. Phosphothreonine; by MAPK1 is present on T292. A Phosphoserine; by PAK modification is found at S298.

This sequence belongs to the protein kinase superfamily. STE Ser/Thr protein kinase family. MAP kinase kinase subfamily. Found in a complex with at least BRAF, HRAS, MAP2K1, MAPK3/ERK1 and RGS14. Forms a heterodimer with MAP2K2/MEK2. Forms heterodimers with KSR2 which further dimerize to form tetramers. Interacts with KSR1 or KSR2 and BRAF; the interaction with KSR1 or KSR2 mediates KSR1-BRAF or KSR2-BRAF dimerization. Interacts with ARBB2, LAMTOR3, MAPK1/ERK2 and RAF1. Interacts with MAPK1/ERK2. Interacts with MORG1. Interacts with PPARG. Interacts with isoform 1 of VRK2. Interacts with SGK1. Interacts with BIRC6/bruce. Interacts with KAT7; the interaction promotes KAT7 phosphorylation. Interacts with RAF1 and NEK10; the interaction is required for ERK1/2-signaling pathway activation in response to UV irradiation. Interacts with TRAF3IP3. Interacts with MOS. In terms of processing, phosphorylation at Ser-218 and Ser-222 by MAP kinase kinase kinases (BRAF or MEKK1) positively regulates the kinase activity. Also phosphorylated at Thr-292 by MAPK1/ERK2 and at Ser-298 by PAK. MAPK1/ERK2 phosphorylation of Thr-292 occurs in response to cellular adhesion and leads to inhibition of Ser-298 phosphorylation by PAK. Autophosphorylated at Ser-218 and Ser-222, autophosphosphorylation is promoted by NEK10 following UV irradiation.

The protein resides in the cytoplasm. The protein localises to the cytoskeleton. It is found in the microtubule organizing center. It localises to the centrosome. Its subcellular location is the spindle pole body. The protein resides in the nucleus. The protein localises to the membrane. It carries out the reaction L-seryl-[protein] + ATP = O-phospho-L-seryl-[protein] + ADP + H(+). The catalysed reaction is L-threonyl-[protein] + ATP = O-phospho-L-threonyl-[protein] + ADP + H(+). The enzyme catalyses L-tyrosyl-[protein] + ATP = O-phospho-L-tyrosyl-[protein] + ADP + H(+). Ras proteins such as HRAS mediate the activation of RAF proteins such as RAF1 or BRAF which in turn activate extracellular signal-regulated kinases (ERK) through MAPK (mitogen-activated protein kinases) and ERK kinases MAP2K1/MEK1 and MAP2K2/MEK2. Activation occurs through phosphorylation of Ser-218 and Ser-222. MAP2K1/MEK1 binds KSR1 or KSR2 releasing the inhibitory intramolecular interaction between KSR1 or KSR2 protein kinase and N-terminal domains. This allows KSR1 or KSR2 dimerization with BRAF leading to BRAF activation and phosphorylation of MAP2K1. MAP2K1/MEK1 is also the target of negative feed-back regulation by its substrate kinases, such as MAPK1/ERK2. These phosphorylate MAP2K1/MEK1 on Thr-292, thereby facilitating dephosphorylation of the activating residues Ser-218 and Ser-222. Inhibited by serine/threonine phosphatase 2A. Functionally, dual specificity protein kinase which acts as an essential component of the MAP kinase signal transduction pathway. Binding of extracellular ligands such as growth factors, cytokines and hormones to their cell-surface receptors activates RAS and this initiates RAF1 activation. RAF1 then further activates the dual-specificity protein kinases MAP2K1/MEK1 and MAP2K2/MEK2. Both MAP2K1/MEK1 and MAP2K2/MEK2 function specifically in the MAPK/ERK cascade, and catalyze the concomitant phosphorylation of a threonine and a tyrosine residue in a Thr-Glu-Tyr sequence located in the extracellular signal-regulated kinases MAPK3/ERK1 and MAPK1/ERK2, leading to their activation and further transduction of the signal within the MAPK/ERK cascade. Activates BRAF in a KSR1 or KSR2-dependent manner; by binding to KSR1 or KSR2 releases the inhibitory intramolecular interaction between KSR1 or KSR2 protein kinase and N-terminal domains which promotes KSR1 or KSR2-BRAF dimerization and BRAF activation. Depending on the cellular context, this pathway mediates diverse biological functions such as cell growth, adhesion, survival and differentiation, predominantly through the regulation of transcription, metabolism and cytoskeletal rearrangements. One target of the MAPK/ERK cascade is peroxisome proliferator-activated receptor gamma (PPARG), a nuclear receptor that promotes differentiation and apoptosis. MAP2K1/MEK1 has been shown to export PPARG from the nucleus. The MAPK/ERK cascade is also involved in the regulation of endosomal dynamics, including lysosome processing and endosome cycling through the perinuclear recycling compartment (PNRC), as well as in the fragmentation of the Golgi apparatus during mitosis. This Pan troglodytes (Chimpanzee) protein is Dual specificity mitogen-activated protein kinase kinase 1 (MAP2K1).